The sequence spans 63 residues: Megourin-1 (63 aa).

In terms of assembly, monomer. Post-translationally, contains four disulfide bonds.

It localises to the secreted. Functionally, has antimicrobial activity against Gram-positive bacteria and fungi. The protein is Megourin-1 of Megoura viciae (Vetch aphid).